Reading from the N-terminus, the 193-residue chain is Holliday junction branch migration complex subunit RuvA (193 aa).

The segment at 1–63 is domain I; that stretch reads MIAHIQGKLV…EDSHSLYGFA (63 aa). The segment at 64–142 is domain II; the sequence is EKSEKEIFKL…KLYDLDQVSI (79 aa). Residues 143 to 145 form a flexible linker region; the sequence is SQS. A domain III region spans residues 145–193; that stretch reads SNTNKDEALSALEVLGFIRKSAEKVVEKIVATMPDATVETIIKQALKNL.

The protein belongs to the RuvA family. As to quaternary structure, homotetramer. Forms an RuvA(8)-RuvB(12)-Holliday junction (HJ) complex. HJ DNA is sandwiched between 2 RuvA tetramers; dsDNA enters through RuvA and exits via RuvB. An RuvB hexamer assembles on each DNA strand where it exits the tetramer. Each RuvB hexamer is contacted by two RuvA subunits (via domain III) on 2 adjacent RuvB subunits; this complex drives branch migration. In the full resolvosome a probable DNA-RuvA(4)-RuvB(12)-RuvC(2) complex forms which resolves the HJ.

The protein localises to the cytoplasm. In terms of biological role, the RuvA-RuvB-RuvC complex processes Holliday junction (HJ) DNA during genetic recombination and DNA repair, while the RuvA-RuvB complex plays an important role in the rescue of blocked DNA replication forks via replication fork reversal (RFR). RuvA specifically binds to HJ cruciform DNA, conferring on it an open structure. The RuvB hexamer acts as an ATP-dependent pump, pulling dsDNA into and through the RuvAB complex. HJ branch migration allows RuvC to scan DNA until it finds its consensus sequence, where it cleaves and resolves the cruciform DNA. The protein is Holliday junction branch migration complex subunit RuvA of Flavobacterium psychrophilum (strain ATCC 49511 / DSM 21280 / CIP 103535 / JIP02/86).